A 941-amino-acid chain; its full sequence is MutS protein homolog 1 (941 aa).

An ATP-binding site is contributed by 747–754; sequence GPNMAGKS.

Belongs to the DNA mismatch repair MutS family.

The protein localises to the cytoplasm. The protein resides in the mitochondrion. In terms of biological role, involved in mitochondrial DNA repair. This is MutS protein homolog 1 (msh1) from Schizosaccharomyces pombe (strain 972 / ATCC 24843) (Fission yeast).